The primary structure comprises 628 residues: Propionate--CoA ligase (628 aa).

The protein belongs to the ATP-dependent AMP-binding enzyme family.

It carries out the reaction propanoate + ATP + CoA = propanoyl-CoA + AMP + diphosphate. It functions in the pathway organic acid metabolism; propanoate degradation. Catalyzes the synthesis of propionyl-CoA from propionate and CoA. Also converts acetate to acetyl-CoA but with a lower specific activity. The protein is Propionate--CoA ligase (prpE) of Escherichia coli (strain K12).